Consider the following 500-residue polypeptide: GTPase Der (500 aa).

EngA-type G domains lie at 3 to 166 and 211 to 384; these read PVVA…MEEL and IKLA…VSAT. GTP is bound by residues 9 to 16, 56 to 60, 118 to 121, 217 to 224, 264 to 268, and 329 to 332; these read GRPNVGKS, DTGGI, NKID, DTAGV, and NKWD. A KH-like domain is found at 385–469; that stretch reads KRVGTSVLTR…PIRIQFQNSE (85 aa). Positions 468–500 are disordered; it reads SENPFEDRGGKLTMSQERQRKRLLGAVKNRNKK. Over residues 486–500 the composition is skewed to basic residues; sequence QRKRLLGAVKNRNKK.

The protein belongs to the TRAFAC class TrmE-Era-EngA-EngB-Septin-like GTPase superfamily. EngA (Der) GTPase family. Associates with the 50S ribosomal subunit.

GTPase that plays an essential role in the late steps of ribosome biogenesis. The protein is GTPase Der of Aliivibrio fischeri (strain ATCC 700601 / ES114) (Vibrio fischeri).